A 461-amino-acid chain; its full sequence is Signal recognition particle receptor FtsY (461 aa).

One copy of the TPR repeat lies at 105–138; that stretch reads FESLYNVAKIYHQLEKPDKALEYAQRAEKLVPYE. GTP contacts are provided by residues 267–274, 349–353, and 413–416; these read GVNGSGKT, DTAGR, and TKLD.

Belongs to the GTP-binding SRP family. FtsY subfamily. In terms of assembly, part of the signal recognition particle protein translocation system, which is composed of SRP and FtsY.

The protein resides in the cell inner membrane. It is found in the cytoplasm. It carries out the reaction GTP + H2O = GDP + phosphate + H(+). Functionally, involved in targeting and insertion of nascent membrane proteins into the cytoplasmic membrane. Acts as a receptor for the complex formed by the signal recognition particle (SRP) and the ribosome-nascent chain (RNC). The sequence is that of Signal recognition particle receptor FtsY from Aquifex aeolicus (strain VF5).